An 873-amino-acid chain; its full sequence is Alanine--tRNA ligase (873 aa).

H562, H566, C663, and H667 together coordinate Zn(2+).

Belongs to the class-II aminoacyl-tRNA synthetase family. Requires Zn(2+) as cofactor.

The protein localises to the cytoplasm. The catalysed reaction is tRNA(Ala) + L-alanine + ATP = L-alanyl-tRNA(Ala) + AMP + diphosphate. Catalyzes the attachment of alanine to tRNA(Ala) in a two-step reaction: alanine is first activated by ATP to form Ala-AMP and then transferred to the acceptor end of tRNA(Ala). Also edits incorrectly charged Ser-tRNA(Ala) and Gly-tRNA(Ala) via its editing domain. The protein is Alanine--tRNA ligase of Bordetella petrii (strain ATCC BAA-461 / DSM 12804 / CCUG 43448).